The following is a 478-amino-acid chain: Cysteine--tRNA ligase (478 aa).

A Zn(2+)-binding site is contributed by Cys-37. The short motif at 39–49 is the 'HIGH' region element; the sequence is PTVYHYAHIGN. 3 residues coordinate Zn(2+): Cys-224, His-249, and Glu-253. The short motif at 281 to 285 is the 'KMSKS' region element; sequence KMSKS. Lys-284 serves as a coordination point for ATP.

The protein belongs to the class-I aminoacyl-tRNA synthetase family. In terms of assembly, monomer. Zn(2+) serves as cofactor.

The protein resides in the cytoplasm. The catalysed reaction is tRNA(Cys) + L-cysteine + ATP = L-cysteinyl-tRNA(Cys) + AMP + diphosphate. This chain is Cysteine--tRNA ligase, found in Protochlamydia amoebophila (strain UWE25).